The chain runs to 608 residues: Nuclear protein localization protein 4 homolog (608 aa).

An N-acetylalanine modification is found at alanine 2. An N6-acetyllysine modification is found at lysine 179. The region spanning 226–363 (IMFENHTVAD…ICRLSPDGHF (138 aa)) is the MPN domain. Residues 580-608 (TSAMWACQHCTFMNQPGTGHCEMCSLPRT) form a RanBP2-type zinc finger.

It belongs to the NPL4 family. As to quaternary structure, heterodimer with UFD1. The heterodimer binds ubiquitinated proteins. The heterodimer binds to VCP and inhibits Golgi membrane fusion. Interacts with ZFAND2B; probably through VCP.

The protein resides in the cytoplasm. Its subcellular location is the cytosol. It is found in the endoplasmic reticulum. It localises to the nucleus. The protein operates within protein degradation; proteasomal ubiquitin-dependent pathway. The ternary complex containing UFD1, VCP and NPLOC4 binds ubiquitinated proteins and is necessary for the export of misfolded proteins from the ER to the cytoplasm, where they are degraded by the proteasome. The NPLOC4-UFD1-VCP complex regulates spindle disassembly at the end of mitosis and is necessary for the formation of a closed nuclear envelope. Acts as a negative regulator of type I interferon production via the complex formed with VCP and UFD1, which binds to RIGI and recruits RNF125 to promote ubiquitination and degradation of RIGI. The sequence is that of Nuclear protein localization protein 4 homolog (Nploc4) from Rattus norvegicus (Rat).